The chain runs to 524 residues: Caffeate CoA-transferase (524 aa).

Glu-323 acts as the 5-glutamyl coenzyme A thioester intermediate in catalysis.

The protein belongs to the 3-oxoacid CoA-transferase family. As to quaternary structure, homodimer.

The enzyme catalyses hydrocaffeoyl-CoA + (E)-caffeate = 3-(3,4-dihydroxyphenyl)propanoate + (E)-caffeoyl-CoA. Involved in caffeate respiration, which consists in the reduction of the C-C double bond of caffeate. CarA catalyzes an energy-saving CoA loop for caffeate activation in the steady state of caffeate respiration. It catalyzes the formation of caffeyl-CoA from caffeate with hydrocaffeyl-CoA as the CoA donor via a ping-pong mechanism. In addition to caffeate, the enzyme can utilize 4-coumarate or ferulate as CoA acceptor. Neither acetyl-CoA nor butyryl-CoA served as the CoA donor. This Acetobacterium woodii protein is Caffeate CoA-transferase.